A 313-amino-acid polypeptide reads, in one-letter code: MGKKKVAIIGSGNIGTDLMIKVMRLSEVLEMGVMVGIDPASDGLARAARMGVATTHKGIDGLLAMPEFADVEIVFDATSAGAHKRNSELVLAAGKRMIDLTPAAIGPYVIPPVNGDKCLDALNVNMVTCGGQATIPIVAAVNRVAKVHYGEIIASIASKSAGPGTRANIDEFTETTSQAIMDVGGATRGKAIIILNPAEPPLIMRDTVYCLCEDADQEAIRQSIHDMVAEVQSYVPGYRLKQAVQFEHIGSNRPLQIPEMDGEYTGLKVSVFLEVEGAAHYLPSYAGNLDIMTSAAMKTAEKIAARMHEGATT.

11–14 serves as a coordination point for NAD(+); that stretch reads SGNI. The active-site Acyl-thioester intermediate is cysteine 129. Residues 160 to 168 and asparagine 288 each bind NAD(+); that span reads SAGPGTRAN.

The protein belongs to the acetaldehyde dehydrogenase family.

The catalysed reaction is acetaldehyde + NAD(+) + CoA = acetyl-CoA + NADH + H(+). The chain is Acetaldehyde dehydrogenase 3 from Rhizorhabdus wittichii (strain DSM 6014 / CCUG 31198 / JCM 15750 / NBRC 105917 / EY 4224 / RW1) (Sphingomonas wittichii).